Here is a 324-residue protein sequence, read N- to C-terminus: Aspartate carbamoyltransferase catalytic subunit (324 aa).

2 residues coordinate carbamoyl phosphate: Arg65 and Thr66. Lys93 is an L-aspartate binding site. Carbamoyl phosphate is bound by residues Arg115, His145, and Gln148. The L-aspartate site is built by Arg178 and Arg233. Carbamoyl phosphate is bound by residues Gly274 and Pro275.

It belongs to the aspartate/ornithine carbamoyltransferase superfamily. ATCase family. Heterododecamer (2C3:3R2) of six catalytic PyrB chains organized as two trimers (C3), and six regulatory PyrI chains organized as three dimers (R2).

It carries out the reaction carbamoyl phosphate + L-aspartate = N-carbamoyl-L-aspartate + phosphate + H(+). Its pathway is pyrimidine metabolism; UMP biosynthesis via de novo pathway; (S)-dihydroorotate from bicarbonate: step 2/3. In terms of biological role, catalyzes the condensation of carbamoyl phosphate and aspartate to form carbamoyl aspartate and inorganic phosphate, the committed step in the de novo pyrimidine nucleotide biosynthesis pathway. The polypeptide is Aspartate carbamoyltransferase catalytic subunit (Nitrosococcus oceani (strain ATCC 19707 / BCRC 17464 / JCM 30415 / NCIMB 11848 / C-107)).